Consider the following 202-residue polypeptide: Adenosylcobalamin/alpha-ribazole phosphatase (202 aa).

Catalysis depends on histidine 8, which acts as the Tele-phosphohistidine intermediate. The Proton donor/acceptor role is filled by glutamate 81.

It belongs to the phosphoglycerate mutase family.

The enzyme catalyses adenosylcob(III)alamin 5'-phosphate + H2O = adenosylcob(III)alamin + phosphate. It catalyses the reaction alpha-ribazole 5'-phosphate + H2O = alpha-ribazole + phosphate. It functions in the pathway nucleoside biosynthesis; alpha-ribazole biosynthesis; alpha-ribazole from 5,6-dimethylbenzimidazole: step 2/2. Functionally, catalyzes the conversion of adenosylcobalamin 5'-phosphate to adenosylcobalamin (vitamin B12); involved in the assembly of the nucleotide loop of cobalamin. Also catalyzes the hydrolysis of the phospho group from alpha-ribazole 5'-phosphate to form alpha-ribazole. The chain is Adenosylcobalamin/alpha-ribazole phosphatase (cobC) from Salmonella typhi.